The following is an 878-amino-acid chain: Phosphoenolpyruvate carboxylase (878 aa).

Active-site residues include H137 and K545.

The protein belongs to the PEPCase type 1 family. Requires Mg(2+) as cofactor.

The enzyme catalyses oxaloacetate + phosphate = phosphoenolpyruvate + hydrogencarbonate. Functionally, forms oxaloacetate, a four-carbon dicarboxylic acid source for the tricarboxylic acid cycle. This chain is Phosphoenolpyruvate carboxylase, found in Yersinia pseudotuberculosis serotype O:1b (strain IP 31758).